The following is a 189-amino-acid chain: Probable hydrogen peroxide-inducible genes activator (189 aa).

Residues 8 to 65 form the HTH lysR-type domain; sequence PTLAGLRAFAAVAEKQHFGSAASALGVNQSTLSQALAGLESGLGVRLIERSTRRVFLT. A DNA-binding region (H-T-H motif) is located at residues 25–44; sequence FGSAASALGVNQSTLSQALA.

This sequence belongs to the LysR transcriptional regulatory family.

Its function is as follows. Required for the induction the katG gene for catalase. Involved in the response to hydrogen peroxide. This Mycobacterium xenopi protein is Probable hydrogen peroxide-inducible genes activator (oxyR).